The sequence spans 463 residues: L-seryl-tRNA(Sec) selenium transferase (463 aa).

K295 bears the N6-(pyridoxal phosphate)lysine mark.

The protein belongs to the SelA family. In terms of assembly, homodecamer; pentamer of dimers. Binds only one seryl-tRNA(Sec) per dimer. It depends on pyridoxal 5'-phosphate as a cofactor.

It is found in the cytoplasm. The catalysed reaction is L-seryl-tRNA(Sec) + selenophosphate + H(+) = L-selenocysteinyl-tRNA(Sec) + phosphate. The protein operates within aminoacyl-tRNA biosynthesis; selenocysteinyl-tRNA(Sec) biosynthesis; selenocysteinyl-tRNA(Sec) from L-seryl-tRNA(Sec) (bacterial route): step 1/1. Converts seryl-tRNA(Sec) to selenocysteinyl-tRNA(Sec) required for selenoprotein biosynthesis. The sequence is that of L-seryl-tRNA(Sec) selenium transferase from Photorhabdus laumondii subsp. laumondii (strain DSM 15139 / CIP 105565 / TT01) (Photorhabdus luminescens subsp. laumondii).